The primary structure comprises 84 residues: Small ribosomal subunit protein bS20 (84 aa).

Belongs to the bacterial ribosomal protein bS20 family.

Functionally, binds directly to 16S ribosomal RNA. This is Small ribosomal subunit protein bS20 from Levilactobacillus brevis (strain ATCC 367 / BCRC 12310 / CIP 105137 / JCM 1170 / LMG 11437 / NCIMB 947 / NCTC 947) (Lactobacillus brevis).